A 414-amino-acid polypeptide reads, in one-letter code: Succinylornithine transaminase (414 aa).

Lys-260 bears the N6-(pyridoxal phosphate)lysine mark.

The protein belongs to the class-III pyridoxal-phosphate-dependent aminotransferase family. AstC subfamily. Requires pyridoxal 5'-phosphate as cofactor.

It catalyses the reaction N(2)-succinyl-L-ornithine + 2-oxoglutarate = N-succinyl-L-glutamate 5-semialdehyde + L-glutamate. It participates in amino-acid degradation; L-arginine degradation via AST pathway; L-glutamate and succinate from L-arginine: step 3/5. Functionally, catalyzes the transamination of N(2)-succinylornithine and alpha-ketoglutarate into N(2)-succinylglutamate semialdehyde and glutamate. Can also act as an acetylornithine aminotransferase. The polypeptide is Succinylornithine transaminase (Yersinia pestis bv. Antiqua (strain Antiqua)).